Here is a 64-residue protein sequence, read N- to C-terminus: Conotoxin Tx3.5-a (64 aa).

The signal sequence occupies residues 1-19 (MSKLGVLLTICLLLFPLTA). The propeptide occupies 20–47 (LPLDGDQPADQAAERMQAEQHPLFDQKR). Intrachain disulfides connect Cys49/Cys58, Cys50/Cys62, and Cys54/Cys63. Cys63 is modified (cysteine amide).

It belongs to the conotoxin M superfamily. Contains 3 disulfide bonds. Post-translationally, two peptides are produced from this precursor. Conotoxin Tx3.5-b is amidated at Cys-63, conotoxin Tx3.5-a has an unmodified C-terminus. Expressed by the venom duct. Is present in all duct parts with a highest content in part 2 (proximal of the venom bulb) and then decreases in concentration toward the end of the duct.

It is found in the secreted. In Conus textile (Cloth-of-gold cone), this protein is Conotoxin Tx3.5-a.